Here is a 162-residue protein sequence, read N- to C-terminus: Endoribonuclease YbeY (162 aa).

Histidine 117, histidine 121, and histidine 127 together coordinate Zn(2+).

This sequence belongs to the endoribonuclease YbeY family. Requires Zn(2+) as cofactor.

The protein resides in the cytoplasm. Its function is as follows. Single strand-specific metallo-endoribonuclease involved in late-stage 70S ribosome quality control and in maturation of the 3' terminus of the 16S rRNA. The protein is Endoribonuclease YbeY of Francisella tularensis subsp. novicida (strain U112).